The primary structure comprises 240 residues: Eukaryotic translation initiation factor 3 subunit J (240 aa).

The interval 1–66 is disordered; that stretch reads MADDWESAAD…VPVKTKPSKA (66 aa). Over residues 27–45 the composition is skewed to acidic residues; it reads GEDDDDDVKESWEDEEEKK.

The protein belongs to the eIF-3 subunit J family. As to quaternary structure, component of the eukaryotic translation initiation factor 3 (eIF-3) complex. The eIF-3 complex interacts with pix.

It is found in the cytoplasm. Functionally, component of the eukaryotic translation initiation factor 3 (eIF-3) complex, which is involved in protein synthesis of a specialized repertoire of mRNAs and, together with other initiation factors, stimulates binding of mRNA and methionyl-tRNAi to the 40S ribosome. The eIF-3 complex specifically targets and initiates translation of a subset of mRNAs involved in cell proliferation. This Drosophila persimilis (Fruit fly) protein is Eukaryotic translation initiation factor 3 subunit J.